Reading from the N-terminus, the 274-residue chain is Trypsin-1 (274 aa).

The first 18 residues, 1–18 (MSNKIAILLAVLVAVVAC), serve as a signal peptide directing secretion. Positions 19–47 (AEAQANQRHRLVRPSPSFSPRPRYAVGQR) are cleaved as a propeptide — activation peptide. The Peptidase S1 domain occupies 48–273 (IVGGFEIDVS…VRDWVRENSG (226 aa)). Cysteines 73 and 89 form a disulfide. Catalysis depends on charge relay system residues His88 and Asp133. 2 disulfide bridges follow: Cys198/Cys214 and Cys225/Cys249. Ser229 acts as the Charge relay system in catalysis.

This sequence belongs to the peptidase S1 family. In terms of tissue distribution, constitutively expressed at low level in the gut of adult females. Also expressed in the gut of male and female pupae.

The protein localises to the secreted. The enzyme catalyses Preferential cleavage: Arg-|-Xaa, Lys-|-Xaa.. Its function is as follows. Major function may be to aid in digestion of the blood meal. The polypeptide is Trypsin-1 (TRYP1) (Anopheles gambiae (African malaria mosquito)).